The sequence spans 162 residues: MEQFLAVGKIINTHGIKGEIKVMPSTDNVERFKELNEAYIDGNIVEIEGCKFQPGKVILKIKGIDSIEDAQRLKNKYIKVSRENAATLDEDCYYEADIVGCTVYDENEKQLGNIDEIIHTGSNDVYWIKGPNELLIPAIKSVIVDIDVNNKKIIIKPLEVWQ.

One can recognise a PRC barrel domain in the interval 90–161 (EDCYYEADIV…KIIIKPLEVW (72 aa)).

The protein belongs to the RimM family. In terms of assembly, binds ribosomal protein uS19.

The protein localises to the cytoplasm. An accessory protein needed during the final step in the assembly of 30S ribosomal subunit, possibly for assembly of the head region. Essential for efficient processing of 16S rRNA. May be needed both before and after RbfA during the maturation of 16S rRNA. It has affinity for free ribosomal 30S subunits but not for 70S ribosomes. This is Ribosome maturation factor RimM from Clostridium novyi (strain NT).